The chain runs to 394 residues: Potassium channel subfamily K member 3 (394 aa).

Residues 1 to 8 lie on the Cytoplasmic side of the membrane; sequence MKRQNVRT. A helical transmembrane segment spans residues 9–29; sequence LALIVCTFTYLLVGAAVFDAL. Residue N53 is glycosylated (N-linked (GlcNAc...) asparagine). The segment at residues 78 to 101 is an intramembrane region (pore-forming); that stretch reads WRFAGSFYFAITVITTIGYGHAAP. Residues T93, I94, G95, and Y96 each coordinate K(+). The segment at 93 to 98 is selectivity filter 1; sequence TIGYGH. Residues 108–128 form a helical membrane-spanning segment; it reads VFCMFYALLGIPLTLVMFQSL. Topologically, residues 129-158 are cytoplasmic; sequence GERINTLVRYLLHRAKKGLGMRRADVSMAN. The chain crosses the membrane as a helical span at residues 159-179; the sequence is MVLIGFFSCISTLCIGAAAFS. An intramembrane region (pore-forming) is located at residues 184-207; sequence WTFFQAYYYCFITLTTIGFGDYVA. 4 residues coordinate K(+): T199, I200, G201, and F202. Residues 199 to 204 are selectivity filter 2; sequence TIGFGD. Residues 223–243 form a helical membrane-spanning segment; that stretch reads FSFVYILTGLTVIGAFLNLVV. An X-gate region spans residues 243–248; sequence VLRFMT. At 244–394 the chain is on the cytoplasmic side; it reads LRFMTMNAED…RGLMKRRSSV (151 aa). Disordered regions lie at residues 266–286 and 338–357; these read RNGQ…DTAS and TCVE…SDTP. The segment covering 269–278 has biased composition (gly residues); the sequence is QAGGGGGGGS.

It belongs to the two pore domain potassium channel (TC 1.A.1.8) family. As to quaternary structure, homodimer. Heterodimer with KCNK1. Heterodimer with KCNK9. Widespread expression in adult. Strongest expression in pancreas and placenta. Lower expression in brain, lung, prostate, heart, kidney, uterus, small intestine and colon.

It is found in the cell membrane. The enzyme catalyses K(+)(in) = K(+)(out). It carries out the reaction Na(+)(in) = Na(+)(out). Inhibited by external acidification, diacylglycerol and anandamide. Activated by halothane and isoflurane. Functionally, k(+) channel that conducts voltage-dependent outward rectifying currents upon membrane depolarization. Voltage sensing is coupled to K(+) electrochemical gradient in an 'ion flux gating' mode where outward but not inward ion flow opens the gate. Changes ion selectivity and becomes permeable to Na(+) ions in response to extracellular acidification. Protonation of the pH sensor His-98 stabilizes C-type inactivation conformation likely converting the channel from outward K(+)-conducting, to inward Na(+)-conducting to nonconductive state. Homo- and heterodimerizes to form functional channels with distinct regulatory and gating properties. Allows K(+) currents with fast-gating kinetics important for the repolarization and hyperpolarization phases of action potentials. In cerebellar granule cells, heteromeric KCNK3:KCNK9 channel may hyperpolarize the resting membrane potential to limit intrinsic neuronal excitability, but once the action potential threshold is reached, it may support high-frequency action potential firing and increased neuronal excitability. Dispensable for central chemosensory respiration i.e. breathing controlled by brainstem CO2/pH, it rather conducts pH-sensitive currents and controls the firing rate of serotonergic raphe neurons involved in potentiation of the respiratory chemoreflex. Additionally, imparts chemosensitivity to type 1 cells in carotid bodies which respond to a decrease in arterial oxygen pressure or an increase in carbon dioxide pressure or pH to initiate adaptive changes in pulmonary ventilation. In adrenal gland, contributes to the maintenance of a hyperpolarized resting membrane potential of aldosterone-producing cells at zona glomerulosa and limits aldosterone release as part of a regulatory mechanism that controls arterial blood pressure and electrolyte homeostasis. In brown adipocytes, mediates K(+) efflux that counteracts norepinephrine-induced membrane depolarization, limits Ca(2+) efflux and downstream cAMP and PKA signaling, ultimately attenuating lipid oxidation and adaptive thermogenesis. In Homo sapiens (Human), this protein is Potassium channel subfamily K member 3.